The primary structure comprises 316 residues: Very long chain fatty acid elongase 6 (316 aa).

N11 is a glycosylation site (N-linked (GlcNAc...) asparagine). The next 6 helical transmembrane spans lie at 30–50 (WMLENWTWVFYYCGIYMLVIF), 64–84 (LRGPLIIWNTLLAMFSIMGAA), 117–137 (FWTWLFVLSKLPELGDTIFIV), 142–162 (PLIFLHWYHHITVLIYSWFSY), 167–189 (SSARWFIVMNYCVHSVMYSYYAL), and 202–222 (MIITSLQLAQMIIGCAINVWA). An N-linked (GlcNAc...) asparagine glycan is attached at N242. A helical membrane pass occupies residues 245–265 (IAMYSSYFVLFARFFYKAYLA).

Belongs to the ELO family. ELOVL6 subfamily. As to expression, detected in the CNS (central nervous system) of third larval instar (at protein level). Expressed in cyst progenitor cells (at protein level). In the adult fly, expressed in several tissues including, sperm, follicular epithelium, nurse cells and cyst cells.

The protein localises to the mitochondrion outer membrane. The protein resides in the endoplasmic reticulum membrane. It carries out the reaction a very-long-chain acyl-CoA + malonyl-CoA + H(+) = a very-long-chain 3-oxoacyl-CoA + CO2 + CoA. The catalysed reaction is hexadecanoyl-CoA + malonyl-CoA + H(+) = 3-oxooctadecanoyl-CoA + CO2 + CoA. It participates in lipid metabolism; fatty acid biosynthesis. Its function is as follows. Catalyzes the first and rate-limiting reaction of the four reactions that constitute the long-chain fatty acids elongation cycle. This process allows the addition of 2 carbons to the chain of long- and very long-chain fatty acids (VLCFAs) per cycle. Condensing enzyme that elongates fatty acids with 12, 14 and 16 carbons with higher activity toward C16:0 acyl-CoAs. Catalyzes the synthesis of unsaturated C16 long chain fatty acids and, to a lesser extent, C18:0 and those with low desaturation degree. May participate in the production of saturated and monounsaturated VLCFAs of different chain lengths that are involved in multiple biological processes as precursors of membrane lipids and lipid mediators. The chain is Very long chain fatty acid elongase 6 from Drosophila melanogaster (Fruit fly).